We begin with the raw amino-acid sequence, 527 residues long: Berberine bridge enzyme-like 5 (527 aa).

A signal peptide spans 1–19 (MKALFSVLCLVLLVSILRA). C32 and C95 are joined by a disulfide. Residues N35 and N52 are each glycosylated (N-linked (GlcNAc...) asparagine). The FAD-binding PCMH-type domain maps to 73 to 247 (NYQKLVAIVA…LSWKINLVEV (175 aa)). The segment at residues 110–172 (HDYEGLSYTS…QTLAFPAGVC (63 aa)) is a cross-link (6-(S-cysteinyl)-8alpha-(pros-histidyl)-FAD (His-Cys)). The N-linked (GlcNAc...) asparagine glycan is linked to N341.

This sequence belongs to the oxygen-dependent FAD-linked oxidoreductase family. Requires FAD as cofactor. The FAD cofactor is bound via a bicovalent 6-S-cysteinyl, 8alpha-N1-histidyl FAD linkage.

The protein resides in the secreted. Its subcellular location is the cell wall. Probable flavin-dependent oxidoreductase. The chain is Berberine bridge enzyme-like 5 from Arabidopsis thaliana (Mouse-ear cress).